Consider the following 385-residue polypeptide: UDP-N-acetylglucosamine--N-acetylmuramyl-(pentapeptide) pyrophosphoryl-undecaprenol N-acetylglucosamine transferase (385 aa).

UDP-N-acetyl-alpha-D-glucosamine is bound by residues 11–13, N117, R160, S215, and Q317; that span reads TGG.

This sequence belongs to the glycosyltransferase 28 family. MurG subfamily.

The protein resides in the cell inner membrane. The catalysed reaction is di-trans,octa-cis-undecaprenyl diphospho-N-acetyl-alpha-D-muramoyl-L-alanyl-D-glutamyl-meso-2,6-diaminopimeloyl-D-alanyl-D-alanine + UDP-N-acetyl-alpha-D-glucosamine = di-trans,octa-cis-undecaprenyl diphospho-[N-acetyl-alpha-D-glucosaminyl-(1-&gt;4)]-N-acetyl-alpha-D-muramoyl-L-alanyl-D-glutamyl-meso-2,6-diaminopimeloyl-D-alanyl-D-alanine + UDP + H(+). It functions in the pathway cell wall biogenesis; peptidoglycan biosynthesis. In terms of biological role, cell wall formation. Catalyzes the transfer of a GlcNAc subunit on undecaprenyl-pyrophosphoryl-MurNAc-pentapeptide (lipid intermediate I) to form undecaprenyl-pyrophosphoryl-MurNAc-(pentapeptide)GlcNAc (lipid intermediate II). This chain is UDP-N-acetylglucosamine--N-acetylmuramyl-(pentapeptide) pyrophosphoryl-undecaprenol N-acetylglucosamine transferase, found in Rickettsia typhi (strain ATCC VR-144 / Wilmington).